The sequence spans 251 residues: Zinc import ATP-binding protein ZnuC (251 aa).

An ABC transporter domain is found at 5-220 (VSLENVSVSF…PEFISMFGPR (216 aa)). 37-44 (GPNGAGKS) provides a ligand contact to ATP.

The protein belongs to the ABC transporter superfamily. Zinc importer (TC 3.A.1.15.5) family. As to quaternary structure, the complex is composed of two ATP-binding proteins (ZnuC), two transmembrane proteins (ZnuB) and a solute-binding protein (ZnuA).

The protein resides in the cell inner membrane. The enzyme catalyses Zn(2+)(out) + ATP(in) + H2O(in) = Zn(2+)(in) + ADP(in) + phosphate(in) + H(+)(in). Its function is as follows. Part of the ABC transporter complex ZnuABC involved in zinc import. Responsible for energy coupling to the transport system. This chain is Zinc import ATP-binding protein ZnuC, found in Shigella flexneri serotype 5b (strain 8401).